Reading from the N-terminus, the 198-residue chain is dITP/XTP pyrophosphatase (198 aa).

A substrate-binding site is contributed by 9-14 (SNNAKK). Mg(2+) is bound by residues Asp-41 and Asp-70. Asp-70 (proton acceptor) is an active-site residue. Substrate-binding positions include Ser-71, 153–156 (FGYD), Lys-176, and 181–182 (HR).

This sequence belongs to the HAM1 NTPase family. As to quaternary structure, homodimer. The cofactor is Mg(2+).

The enzyme catalyses XTP + H2O = XMP + diphosphate + H(+). It carries out the reaction dITP + H2O = dIMP + diphosphate + H(+). It catalyses the reaction ITP + H2O = IMP + diphosphate + H(+). Functionally, pyrophosphatase that catalyzes the hydrolysis of nucleoside triphosphates to their monophosphate derivatives, with a high preference for the non-canonical purine nucleotides XTP (xanthosine triphosphate), dITP (deoxyinosine triphosphate) and ITP. Seems to function as a house-cleaning enzyme that removes non-canonical purine nucleotides from the nucleotide pool, thus preventing their incorporation into DNA/RNA and avoiding chromosomal lesions. In Aromatoleum aromaticum (strain DSM 19018 / LMG 30748 / EbN1) (Azoarcus sp. (strain EbN1)), this protein is dITP/XTP pyrophosphatase.